We begin with the raw amino-acid sequence, 355 residues long: Tetraacyldisaccharide 4'-kinase (355 aa).

Residue 49-56 (TAGGTGKT) coordinates ATP.

It belongs to the LpxK family.

The enzyme catalyses a lipid A disaccharide + ATP = a lipid IVA + ADP + H(+). It functions in the pathway glycolipid biosynthesis; lipid IV(A) biosynthesis; lipid IV(A) from (3R)-3-hydroxytetradecanoyl-[acyl-carrier-protein] and UDP-N-acetyl-alpha-D-glucosamine: step 6/6. In terms of biological role, transfers the gamma-phosphate of ATP to the 4'-position of a tetraacyldisaccharide 1-phosphate intermediate (termed DS-1-P) to form tetraacyldisaccharide 1,4'-bis-phosphate (lipid IVA). The polypeptide is Tetraacyldisaccharide 4'-kinase (Chlorobium luteolum (strain DSM 273 / BCRC 81028 / 2530) (Pelodictyon luteolum)).